A 749-amino-acid polypeptide reads, in one-letter code: MGRVVGIDLGTTNSVIAVMEGGKPMVIANAEGVRTTPSVVGVSKTGERLVGELARRQLVLNPRNTFANIKRFIGRRYDELTDESKRVPYTVRRDPEGNVRIVCPQLSREFAPEEVAAMILRKLAEEASRYLGEPVTGAVITVPAYFNDSQRQATRDAGRIAGLEVKRILNEPTAASLAYGLDRRDNQTILVFDLGGGTFDVSVLKVGNGVFEVKATSGDTQLGGNDFDRRIVDWLAEQFLEAEGIDLRRDRQALQRLIEAAEKAKIELSGVSVTDINLPFITATEDEPKHLETRLTRSEFEALCEDLLERMMRPLRRALKDARLQPQDIDEVVLVGGSTRMPMVQQLVRSLIGREPNQNVNPDEVVAIGAAIQAGILAGEVKDILLLDVTPLSLGLETIGGVMKKLIPRNTAIPVRRSDIFSTAENNQTMVEIHILQGERQLAEGNKSLGRFKLTGIPPAPRGVPQVQVSFDIDANGILQVSALDKTTGREQTVTIQGASTLSQEEVKRMMKDAELYAQQDRQLKARIEKRNRAQTLIAQSERRLREISLDFGLYFAESKRRRIESTIRELKDYLERQDDRGLDLALAELQDALFDLNQETAARLRDEEGEGFFEPLKQTFASLRGDGNRDFERSWDDRGGDRWDADPWDRSRRSTPSYGYDDRRSPVSDPYRGERWVEEQTSMSRREPVRDRNGGNGSVRPEPAPRRGRPTWEEDQPPRRDRSSQPPAKPASGRRWNDGWDDDDDEWF.

T198 carries the phosphothreonine; by autocatalysis modification. 3 stretches are compositionally biased toward basic and acidic residues: residues 643–653 (RWDADPWDRSR), 661–694 (YDDRRSPVSDPYRGERWVEEQTSMSRREPVRDRN), and 711–724 (PTWEEDQPPRRDRS). Residues 643 to 749 (RWDADPWDRS…GWDDDDDEWF (107 aa)) form a disordered region. Positions 740–749 (GWDDDDDEWF) are enriched in acidic residues.

Belongs to the heat shock protein 70 family.

In terms of biological role, acts as a chaperone. The polypeptide is Chaperone protein dnaK3 (dnaK3) (Synechococcus elongatus (strain ATCC 33912 / PCC 7942 / FACHB-805) (Anacystis nidulans R2)).